The primary structure comprises 55 residues: UPF0391 membrane protein Tbd_2772 (55 aa).

Helical transmembrane passes span 1-21 and 28-48; these read MFGWAITFLVIAIAAGIFGFA and AWIAKVLFVVGLAAVLIMLVM.

The protein belongs to the UPF0391 family.

The protein resides in the cell membrane. The protein is UPF0391 membrane protein Tbd_2772 of Thiobacillus denitrificans (strain ATCC 25259 / T1).